We begin with the raw amino-acid sequence, 300 residues long: Inosose dehydratase (300 aa).

Belongs to the IolE/MocC family. Requires glutathione as cofactor. The cofactor is Co(2+). It depends on Mn(2+) as a cofactor.

The catalysed reaction is scyllo-inosose = 3D-3,5/4-trihydroxycyclohexane-1,2-dione + H2O. It functions in the pathway polyol metabolism; myo-inositol degradation into acetyl-CoA; acetyl-CoA from myo-inositol: step 2/7. Functionally, catalyzes the dehydration of inosose (2-keto-myo-inositol, 2KMI or 2,4,6/3,5-pentahydroxycyclohexanone) to 3D-(3,5/4)-trihydroxycyclohexane-1,2-dione (D-2,3-diketo-4-deoxy-epi-inositol). The protein is Inosose dehydratase of Lactiplantibacillus plantarum (strain ATCC BAA-793 / NCIMB 8826 / WCFS1) (Lactobacillus plantarum).